The chain runs to 276 residues: MDWILICKALALGIVEGLTEFLPVSSTGHLIVAGSFLRFHPEQAKTFDVVIQFGAILAVCWEYRRRIVDVVTGLPAQREARRFTMNVVIATLPAIALALLFEKTIKSVLFAPVPVAVALVVGGAVILWVEGRQRERGKPSRVQSIDALTPLDALKVGLAQCFALIPGVSRSGSTIIGGMLFGLERRVATEFSFFLAIPVIFGATLYETAKDWHAFNVDSIGLFAIGLAAAFVSAFACVRWLLRYVASHDFTAFAWYRIVFGLFVLLVGYSGWIEWI.

5 helical membrane-spanning segments follow: residues 85 to 105 (MNVVIATLPAIALALLFEKTI), 108 to 128 (VLFAPVPVAVALVVGGAVILW), 187 to 207 (VATEFSFFLAIPVIFGATLYE), 217 to 237 (VDSIGLFAIGLAAAFVSAFAC), and 253 to 273 (FAWYRIVFGLFVLLVGYSGWI).

This sequence belongs to the UppP family.

It localises to the cell inner membrane. The enzyme catalyses di-trans,octa-cis-undecaprenyl diphosphate + H2O = di-trans,octa-cis-undecaprenyl phosphate + phosphate + H(+). Catalyzes the dephosphorylation of undecaprenyl diphosphate (UPP). Confers resistance to bacitracin. The protein is Undecaprenyl-diphosphatase 1 of Burkholderia thailandensis (strain ATCC 700388 / DSM 13276 / CCUG 48851 / CIP 106301 / E264).